The following is a 524-amino-acid chain: Probable serine/threonine-protein kinase WNK10 (524 aa).

In terms of domain architecture, Protein kinase spans 16–273 (IRYNDVLGRG…ALELLKDQLL (258 aa)). ATP contacts are provided by residues 96 to 99 (TELF) and Lys146. Asp163 serves as the catalytic Proton acceptor. Ser477 bears the Phosphoserine mark. Positions 480 to 523 (SNKQSEDLKTELNVIESQYNQSCQRLLRMKEEAIEKAKRKWMKL) form a coiled coil.

This sequence belongs to the protein kinase superfamily. Ser/Thr protein kinase family. WNK subfamily.

The catalysed reaction is L-seryl-[protein] + ATP = O-phospho-L-seryl-[protein] + ADP + H(+). The enzyme catalyses L-threonyl-[protein] + ATP = O-phospho-L-threonyl-[protein] + ADP + H(+). Its function is as follows. May regulate flowering time by modulating the photoperiod pathway. The polypeptide is Probable serine/threonine-protein kinase WNK10 (WNK10) (Arabidopsis thaliana (Mouse-ear cress)).